A 417-amino-acid chain; its full sequence is Candidapepsin-4 (417 aa).

A signal peptide spans 1–18 (MFLQNILSVLAFALLIDA). A propeptide spans 19–75 (APVKRSTGFVTLDFNVKRSLVDPKDPTVEVKRSPLFLDIEPTEIPVDDTGRNDVGKR) (activation peptide). The 315-residue stretch at 89 to 403 (YSADITIGSN…DLDDRKISMA (315 aa)) folds into the Peptidase A1 domain. The active site involves Asp-107. The cysteines at positions 122 and 134 are disulfide-linked. Asn-137 carries an N-linked (GlcNAc...) asparagine glycan. Residue Asp-293 is part of the active site. Residues Cys-331 and Cys-369 are joined by a disulfide bond.

It belongs to the peptidase A1 family. O-glycosylated.

It localises to the secreted. The catalysed reaction is Preferential cleavage at the carboxyl of hydrophobic amino acids, but fails to cleave 15-Leu-|-Tyr-16, 16-Tyr-|-Leu-17 and 24-Phe-|-Phe-25 of insulin B chain. Activates trypsinogen, and degrades keratin.. This is Candidapepsin-4 (SAP4) from Candida albicans (strain WO-1) (Yeast).